We begin with the raw amino-acid sequence, 356 residues long: Glutamine synthetase (356 aa).

The 81-residue stretch at 19–99 (VIAEYIWIGG…VICDTYTPAG (81 aa)) folds into the GS beta-grasp domain. The 251-residue stretch at 106-356 (KRHGAAKIFS…IAETTLLWKP (251 aa)) folds into the GS catalytic domain.

It belongs to the glutamine synthetase family. In terms of assembly, homooctamer. Found at highest levels in root nodules.

Its subcellular location is the cytoplasm. It carries out the reaction L-glutamate + NH4(+) + ATP = L-glutamine + ADP + phosphate + H(+). In Alnus glutinosa (European alder), this protein is Glutamine synthetase (GLN1).